A 183-amino-acid polypeptide reads, in one-letter code: Dual-action ribosomal maturation protein DarP (183 aa).

The protein belongs to the DarP family.

Its subcellular location is the cytoplasm. In terms of biological role, member of a network of 50S ribosomal subunit biogenesis factors which assembles along the 30S-50S interface, preventing incorrect 23S rRNA structures from forming. Promotes peptidyl transferase center (PTC) maturation. The sequence is that of Dual-action ribosomal maturation protein DarP from Escherichia coli O7:K1 (strain IAI39 / ExPEC).